A 359-amino-acid chain; its full sequence is MNIYEQLQAVEDRYEELGELLSDPDVVSDTKRFMDLSKEEASTRDTVTAYREYKKVLQNITDAEEMIKDASGDADLEEMAKQELKDAKAEKEEYEEKLKILLLPKDPNDDKNIILEIRGAAGGDEAQLFAGDLLQMYQKYAESQGWRFEVMEASYNGVGGIKEVVAMVSGQSVYSKLKYESGAHRVQRVPVTESQGRVHTSTATVLVMPEIEEVEYDIDPKDLRVDIYHASGAGGQNVNKVATAVRIVHLPTNIKVEMQEERTQQKNRDKAMKIIRARVADHFAQIAQDEQDAERKSTIGTGDRSERIRTYNFPQNRVTDHRIGLTLQKLDTILAGKLDEVVDALVLYDQTQKLEELNK.

Glutamine 236 carries the post-translational modification N5-methylglutamine. The tract at residues 288-307 (QDEQDAERKSTIGTGDRSER) is disordered. A compositionally biased stretch (basic and acidic residues) spans 293–307 (AERKSTIGTGDRSER).

The protein belongs to the prokaryotic/mitochondrial release factor family. Post-translationally, methylated by PrmC. Methylation increases the termination efficiency of RF1.

The protein localises to the cytoplasm. Functionally, peptide chain release factor 1 directs the termination of translation in response to the peptide chain termination codons UAG and UAA. In Streptococcus sanguinis (strain SK36), this protein is Peptide chain release factor 1.